A 387-amino-acid polypeptide reads, in one-letter code: Phosphoglycerate kinase (387 aa).

Substrate-binding positions include 21–23, arginine 36, 59–62, arginine 113, and arginine 146; these read DLN and HLGR. ATP contacts are provided by residues lysine 197, glutamate 314, and 340–343; that span reads GGDT.

This sequence belongs to the phosphoglycerate kinase family. In terms of assembly, monomer.

It localises to the cytoplasm. It carries out the reaction (2R)-3-phosphoglycerate + ATP = (2R)-3-phospho-glyceroyl phosphate + ADP. It functions in the pathway carbohydrate degradation; glycolysis; pyruvate from D-glyceraldehyde 3-phosphate: step 2/5. In Pseudomonas fluorescens (strain SBW25), this protein is Phosphoglycerate kinase.